A 292-amino-acid polypeptide reads, in one-letter code: Histamine N-methyltransferase (292 aa).

Glutamate 28 serves as a coordination point for substrate. Residues glycine 60, glutamate 89, glutamine 94, serine 120, and isoleucine 142 each contribute to the S-adenosyl-L-methionine site. Substrate is bound at residue asparagine 283.

It belongs to the class I-like SAM-binding methyltransferase superfamily. HNMT family. In terms of assembly, monomer.

The protein resides in the cytoplasm. The catalysed reaction is histamine + S-adenosyl-L-methionine = N(tau)-methylhistamine + S-adenosyl-L-homocysteine + H(+). In terms of biological role, inactivates histamine by N-methylation. Plays an important role in degrading histamine and in regulating the airway response to histamine. This Bos taurus (Bovine) protein is Histamine N-methyltransferase (HNMT).